We begin with the raw amino-acid sequence, 98 residues long: Aspartyl/glutamyl-tRNA(Asn/Gln) amidotransferase subunit C (98 aa).

The tract at residues 77 to 98 (NEAPNPEGDFFRVPQILNTDEE) is disordered.

It belongs to the GatC family. As to quaternary structure, heterotrimer of A, B and C subunits.

It carries out the reaction L-glutamyl-tRNA(Gln) + L-glutamine + ATP + H2O = L-glutaminyl-tRNA(Gln) + L-glutamate + ADP + phosphate + H(+). It catalyses the reaction L-aspartyl-tRNA(Asn) + L-glutamine + ATP + H2O = L-asparaginyl-tRNA(Asn) + L-glutamate + ADP + phosphate + 2 H(+). Allows the formation of correctly charged Asn-tRNA(Asn) or Gln-tRNA(Gln) through the transamidation of misacylated Asp-tRNA(Asn) or Glu-tRNA(Gln) in organisms which lack either or both of asparaginyl-tRNA or glutaminyl-tRNA synthetases. The reaction takes place in the presence of glutamine and ATP through an activated phospho-Asp-tRNA(Asn) or phospho-Glu-tRNA(Gln). The polypeptide is Aspartyl/glutamyl-tRNA(Asn/Gln) amidotransferase subunit C (Crocosphaera subtropica (strain ATCC 51142 / BH68) (Cyanothece sp. (strain ATCC 51142))).